A 1040-amino-acid chain; its full sequence is Isoleucine--tRNA ligase (1040 aa).

The 'HIGH' region signature appears at 47 to 57 (PYCSGSIHLGT). Positions 605–609 (KMSKS) match the 'KMSKS' region motif. An ATP-binding site is contributed by K608.

This sequence belongs to the class-I aminoacyl-tRNA synthetase family. IleS type 2 subfamily. As to quaternary structure, monomer. Requires Zn(2+) as cofactor.

Its subcellular location is the cytoplasm. It catalyses the reaction tRNA(Ile) + L-isoleucine + ATP = L-isoleucyl-tRNA(Ile) + AMP + diphosphate. Its function is as follows. Catalyzes the attachment of isoleucine to tRNA(Ile). As IleRS can inadvertently accommodate and process structurally similar amino acids such as valine, to avoid such errors it has two additional distinct tRNA(Ile)-dependent editing activities. One activity is designated as 'pretransfer' editing and involves the hydrolysis of activated Val-AMP. The other activity is designated 'posttransfer' editing and involves deacylation of mischarged Val-tRNA(Ile). The sequence is that of Isoleucine--tRNA ligase from Methanococcus aeolicus (strain ATCC BAA-1280 / DSM 17508 / OCM 812 / Nankai-3).